The sequence spans 333 residues: Probable tRNA pseudouridine synthase B (333 aa).

Positions 1–14 (MKCPSREVFSKFEE) are enriched in basic and acidic residues. Residues 1-27 (MKCPSREVFSKFEESTNPQWGKPPSQR) form a disordered region. The Nucleophile role is filled by Asp71. A PUA domain is found at 238–313 (LPKIWVRDSA…LVARTDRVVM (76 aa)).

It belongs to the pseudouridine synthase TruB family. Type 2 subfamily.

The catalysed reaction is uridine(55) in tRNA = pseudouridine(55) in tRNA. Functionally, could be responsible for synthesis of pseudouridine from uracil-55 in the psi GC loop of transfer RNAs. The sequence is that of Probable tRNA pseudouridine synthase B from Pyrobaculum aerophilum (strain ATCC 51768 / DSM 7523 / JCM 9630 / CIP 104966 / NBRC 100827 / IM2).